The following is a 181-amino-acid chain: Bifunctional protein PyrR (181 aa).

Substrate is bound by residues 39-40, 104-112, Arg-137, and Val-161; these read RR and DDVLYTGRT. The PRPP-binding signature appears at 100–112; it reads VILVDDVLYTGRT.

The protein belongs to the purine/pyrimidine phosphoribosyltransferase family. PyrR subfamily.

It catalyses the reaction UMP + diphosphate = 5-phospho-alpha-D-ribose 1-diphosphate + uracil. Functionally, regulates the transcription of the pyrimidine nucleotide (pyr) operon in response to exogenous pyrimidines. In terms of biological role, also displays a weak uracil phosphoribosyltransferase activity which is not physiologically significant. The sequence is that of Bifunctional protein PyrR from Pasteurella multocida (strain Pm70).